The primary structure comprises 212 residues: ECF RNA polymerase sigma factor SigD (212 aa).

The segment at 49 to 119 (ETIRPIVVRY…VADAHRAAGR (71 aa)) is sigma-70 factor domain-2. Residues 75–78 (DVAQ) carry the Polymerase core binding motif. The interval 152–201 (NELLEILPAKQREILILRVVVGLSAEETAAAVGSTTGAVRVAQHRALQRL) is sigma-70 factor domain-4. The segment at residues 176-195 (AEETAAAVGSTTGAVRVAQH) is a DNA-binding region (H-T-H motif).

This sequence belongs to the sigma-70 factor family. ECF subfamily. Interacts transiently with the RNA polymerase catalytic core formed by RpoA, RpoB, RpoC and RpoZ (2 alpha, 1 beta, 1 beta' and 1 omega subunit) to form the RNA polymerase holoenzyme that can initiate transcription. Interacts (via sigma-70 factor domain 4) with RsdA.

Sigma factors are initiation factors that promote the attachment of RNA polymerase to specific initiation sites and are then released. Extracytoplasmic function (ECF) sigma factors are held in an inactive form by an anti-sigma factor until released by regulated intramembrane proteolysis. The protein is ECF RNA polymerase sigma factor SigD (sigD) of Mycobacterium bovis (strain ATCC BAA-935 / AF2122/97).